Reading from the N-terminus, the 237-residue chain is Ribosomal RNA small subunit methyltransferase G (237 aa).

S-adenosyl-L-methionine contacts are provided by residues Gly78, Phe83, 129–130 (AE), and Arg148.

Belongs to the methyltransferase superfamily. RNA methyltransferase RsmG family.

It is found in the cytoplasm. Specifically methylates the N7 position of a guanine in 16S rRNA. In Streptococcus equi subsp. zooepidemicus (strain H70), this protein is Ribosomal RNA small subunit methyltransferase G.